The primary structure comprises 156 residues: Endoribonuclease YbeY (156 aa).

Zn(2+) is bound by residues His-122, His-126, and His-132.

The protein belongs to the endoribonuclease YbeY family. The cofactor is Zn(2+).

It localises to the cytoplasm. Its function is as follows. Single strand-specific metallo-endoribonuclease involved in late-stage 70S ribosome quality control and in maturation of the 3' terminus of the 16S rRNA. The polypeptide is Endoribonuclease YbeY (Bacillus cereus (strain ATCC 10987 / NRS 248)).